A 356-amino-acid polypeptide reads, in one-letter code: Tyrosine recombinase XerS (356 aa).

The region spanning 16-121 (VMPPYVLEYY…ALSSLYKYLT (106 aa)) is the Core-binding (CB) domain. The Tyr recombinase domain maps to 169–354 (GFLDYIDSEY…INEEQKNALD (186 aa)). Active-site residues include Arg-210, Lys-234, His-306, Arg-309, and His-332. Residue Tyr-341 is the O-(3'-phospho-DNA)-tyrosine intermediate of the active site.

It belongs to the 'phage' integrase family. XerS subfamily.

The protein resides in the cytoplasm. FtsK is required for recombination. Its function is as follows. Site-specific tyrosine recombinase, which acts by catalyzing the cutting and rejoining of the recombining DNA molecules. Essential to convert dimers of the bacterial chromosome into monomers to permit their segregation at cell division. Binds an atypical recombination dif site (difSL). Binds preferentially to the left arm and cooperatively to the right arm of difSL. The protein is Tyrosine recombinase XerS of Lactococcus lactis subsp. cremoris (strain MG1363).